The chain runs to 231 residues: Large ribosomal subunit protein uL1 (231 aa).

This sequence belongs to the universal ribosomal protein uL1 family. As to quaternary structure, part of the 50S ribosomal subunit.

Binds directly to 23S rRNA. The L1 stalk is quite mobile in the ribosome, and is involved in E site tRNA release. Functionally, protein L1 is also a translational repressor protein, it controls the translation of the L11 operon by binding to its mRNA. The chain is Large ribosomal subunit protein uL1 from Ralstonia pickettii (strain 12J).